The primary structure comprises 287 residues: Glutamate racemase (287 aa).

Over residues 1 to 15 the composition is skewed to polar residues; the sequence is MATKPQDANTTSREA. Positions 1 to 25 are disordered; it reads MATKPQDANTTSREAITSKADSPPR. Substrate is bound by residues 32-33 and 64-65; these read DS and YG. Cys96 (proton donor/acceptor) is an active-site residue. 97-98 is a substrate binding site; sequence NT. The active-site Proton donor/acceptor is Cys208. Residue 209-210 participates in substrate binding; the sequence is TH.

The protein belongs to the aspartate/glutamate racemases family.

The catalysed reaction is L-glutamate = D-glutamate. The protein operates within cell wall biogenesis; peptidoglycan biosynthesis. In terms of biological role, provides the (R)-glutamate required for cell wall biosynthesis. This Yersinia pseudotuberculosis serotype O:1b (strain IP 31758) protein is Glutamate racemase.